The following is a 431-amino-acid chain: Ribosome assembly protein SQT1 (431 aa).

6 WD repeats span residues 63–102 (KHTD…PKFA), 107–146 (GYGE…AQWK), 149–192 (SQMQ…GSLE), 199–243 (VHQQ…QLFK), 309–348 (ELDA…VRHK), and 350–387 (VLED…EKFV).

Interacts strongly with QSR1. Part of an oligomeric protein complex that is loosely associated with ribosomes.

May be involved in the late step of 60S ribosomal subunit assembly or modification in the cytoplasm. In Saccharomyces cerevisiae (strain ATCC 204508 / S288c) (Baker's yeast), this protein is Ribosome assembly protein SQT1 (SQT1).